A 158-amino-acid polypeptide reads, in one-letter code: SsrA-binding protein (158 aa).

The segment at 130-158 is disordered; it reads KGKKNHDKREAQAKRDWSRQKQRLLKDHG. A compositionally biased stretch (basic and acidic residues) spans 136–158; that stretch reads DKREAQAKRDWSRQKQRLLKDHG.

It belongs to the SmpB family.

It localises to the cytoplasm. Its function is as follows. Required for rescue of stalled ribosomes mediated by trans-translation. Binds to transfer-messenger RNA (tmRNA), required for stable association of tmRNA with ribosomes. tmRNA and SmpB together mimic tRNA shape, replacing the anticodon stem-loop with SmpB. tmRNA is encoded by the ssrA gene; the 2 termini fold to resemble tRNA(Ala) and it encodes a 'tag peptide', a short internal open reading frame. During trans-translation Ala-aminoacylated tmRNA acts like a tRNA, entering the A-site of stalled ribosomes, displacing the stalled mRNA. The ribosome then switches to translate the ORF on the tmRNA; the nascent peptide is terminated with the 'tag peptide' encoded by the tmRNA and targeted for degradation. The ribosome is freed to recommence translation, which seems to be the essential function of trans-translation. The polypeptide is SsrA-binding protein (Ruegeria sp. (strain TM1040) (Silicibacter sp.)).